The chain runs to 311 residues: Biotin synthase (311 aa).

The Radical SAM core domain occupies 32–258 (NGVQFCQLLN…LFPLSRIRLA (227 aa)). Positions 47, 51, and 54 each coordinate [4Fe-4S] cluster. Residues Cys-91, Cys-124, Cys-184, and Arg-256 each coordinate [2Fe-2S] cluster.

It belongs to the radical SAM superfamily. Biotin synthase family. Homodimer. [4Fe-4S] cluster is required as a cofactor. It depends on [2Fe-2S] cluster as a cofactor.

It carries out the reaction (4R,5S)-dethiobiotin + (sulfur carrier)-SH + 2 reduced [2Fe-2S]-[ferredoxin] + 2 S-adenosyl-L-methionine = (sulfur carrier)-H + biotin + 2 5'-deoxyadenosine + 2 L-methionine + 2 oxidized [2Fe-2S]-[ferredoxin]. Its pathway is cofactor biosynthesis; biotin biosynthesis; biotin from 7,8-diaminononanoate: step 2/2. In terms of biological role, catalyzes the conversion of dethiobiotin (DTB) to biotin by the insertion of a sulfur atom into dethiobiotin via a radical-based mechanism. The sequence is that of Biotin synthase from Methylacidiphilum infernorum (isolate V4) (Methylokorus infernorum (strain V4)).